We begin with the raw amino-acid sequence, 824 residues long: Silver exporting P-type ATPase (824 aa).

The disordered stretch occupies residues 89–112; that stretch reads ASEHHHHHDHHEVSPDKIKQSHRQ. The span at 98 to 112 shows a compositional bias: basic and acidic residues; that stretch reads HHEVSPDKIKQSHRQ. Transmembrane regions (helical) follow at residues 167 to 187, 200 to 220, 234 to 254, 268 to 288, 427 to 447, and 455 to 475; these read FWLGLLLAFPVLILEMGSHLF, TWLQLLLASPVVLWCGWPFFA, FTLVAMGTGVAWVYSVIATVF, LVAIYFEAAAVITVLVLLGQV, WFVPLVILIAVVAFMIWSVWG, and GLIAAVSVLIIACPCALGLAT. Asp-511 (4-aspartylphosphate intermediate) is an active-site residue. A run of 2 helical transmembrane segments spans residues 764-784 and 785-805; these read IRQNLFFAFIYNALGVPVAAG and LLYPVYGILLSPVIAAAAMAL.

This sequence belongs to the cation transport ATPase (P-type) (TC 3.A.3) family. Type IB subfamily.

It is found in the cell membrane. The enzyme catalyses Ag(+)(in) + ATP + H2O = Ag(+)(out) + ADP + phosphate + H(+). Functionally, component of the sil cation-efflux system that confers resistance to silver. The protein is Silver exporting P-type ATPase (silP) of Salmonella typhimurium.